Consider the following 115-residue polypeptide: Large ribosomal subunit protein bL19 (115 aa).

The protein belongs to the bacterial ribosomal protein bL19 family.

Functionally, this protein is located at the 30S-50S ribosomal subunit interface and may play a role in the structure and function of the aminoacyl-tRNA binding site. This Desulfovibrio desulfuricans (strain ATCC 27774 / DSM 6949 / MB) protein is Large ribosomal subunit protein bL19.